Reading from the N-terminus, the 348-residue chain is Sulfate/thiosulfate import ATP-binding protein CysA (348 aa).

The region spanning isoleucine 3–isoleucine 237 is the ABC transporter domain. Glycine 35–threonine 42 is a binding site for ATP.

The protein belongs to the ABC transporter superfamily. Sulfate/tungstate importer (TC 3.A.1.6) family. As to quaternary structure, the complex is composed of two ATP-binding proteins (CysA), two transmembrane proteins (CysT and CysW) and a solute-binding protein (CysP).

Its subcellular location is the cell inner membrane. The catalysed reaction is sulfate(out) + ATP + H2O = sulfate(in) + ADP + phosphate + H(+). It catalyses the reaction thiosulfate(out) + ATP + H2O = thiosulfate(in) + ADP + phosphate + H(+). Its function is as follows. Part of the ABC transporter complex CysAWTP involved in sulfate/thiosulfate import. Responsible for energy coupling to the transport system. In Methylococcus capsulatus (strain ATCC 33009 / NCIMB 11132 / Bath), this protein is Sulfate/thiosulfate import ATP-binding protein CysA.